Reading from the N-terminus, the 172-residue chain is Phosphopantetheine adenylyltransferase (172 aa).

Threonine 14 provides a ligand contact to substrate. ATP contacts are provided by residues 14–15 and histidine 22; that span reads TF. Residues lysine 46, leucine 78, and arginine 92 each coordinate substrate. ATP is bound by residues 93–95, glutamate 103, and 128–134; these read GMR and WLYISST.

Belongs to the bacterial CoaD family. Homohexamer. It depends on Mg(2+) as a cofactor.

It is found in the cytoplasm. The enzyme catalyses (R)-4'-phosphopantetheine + ATP + H(+) = 3'-dephospho-CoA + diphosphate. Its pathway is cofactor biosynthesis; coenzyme A biosynthesis; CoA from (R)-pantothenate: step 4/5. In terms of biological role, reversibly transfers an adenylyl group from ATP to 4'-phosphopantetheine, yielding dephospho-CoA (dPCoA) and pyrophosphate. The polypeptide is Phosphopantetheine adenylyltransferase (Solidesulfovibrio magneticus (strain ATCC 700980 / DSM 13731 / RS-1) (Desulfovibrio magneticus)).